The following is a 148-amino-acid chain: Transcription antitermination protein NusB (148 aa).

The protein belongs to the NusB family.

In terms of biological role, involved in transcription antitermination. Required for transcription of ribosomal RNA (rRNA) genes. Binds specifically to the boxA antiterminator sequence of the ribosomal RNA (rrn) operons. This Aquifex aeolicus (strain VF5) protein is Transcription antitermination protein NusB.